Here is a 287-residue protein sequence, read N- to C-terminus: Putative ABC transporter ATP-binding protein MM_1038 (287 aa).

The ABC transporter domain occupies 5 to 238 (LENISVFYSR…ENVPLPPVAS (234 aa)). Residue 40-47 (GEKGAGKS) participates in ATP binding.

The protein belongs to the ABC transporter superfamily.

Its subcellular location is the cell membrane. In terms of biological role, probably part of an ABC transporter complex. Responsible for energy coupling to the transport system. This chain is Putative ABC transporter ATP-binding protein MM_1038, found in Methanosarcina mazei (strain ATCC BAA-159 / DSM 3647 / Goe1 / Go1 / JCM 11833 / OCM 88) (Methanosarcina frisia).